Here is a 175-residue protein sequence, read N- to C-terminus: ATP synthase subunit b, chloroplastic (175 aa).

The chain crosses the membrane as a helical span at residues 21–40 (LLESNVINIIILISLLIYLG).

Belongs to the ATPase B chain family. In terms of assembly, F-type ATPases have 2 components, F(1) - the catalytic core - and F(0) - the membrane proton channel. F(1) has five subunits: alpha(3), beta(3), gamma(1), delta(1), epsilon(1). F(0) has four main subunits: a(1), b(1), b'(1) and c(10-14). The alpha and beta chains form an alternating ring which encloses part of the gamma chain. F(1) is attached to F(0) by a central stalk formed by the gamma and epsilon chains, while a peripheral stalk is formed by the delta, b and b' chains.

Its subcellular location is the plastid. The protein resides in the chloroplast thylakoid membrane. F(1)F(0) ATP synthase produces ATP from ADP in the presence of a proton or sodium gradient. F-type ATPases consist of two structural domains, F(1) containing the extramembraneous catalytic core and F(0) containing the membrane proton channel, linked together by a central stalk and a peripheral stalk. During catalysis, ATP synthesis in the catalytic domain of F(1) is coupled via a rotary mechanism of the central stalk subunits to proton translocation. In terms of biological role, component of the F(0) channel, it forms part of the peripheral stalk, linking F(1) to F(0). The chain is ATP synthase subunit b, chloroplastic from Cyanidium caldarium (Red alga).